The following is a 350-amino-acid chain: MTDQRPSLEIRLCGPRGFCAGVDRAIQIVVLALKKYGAPVYVRHEIVHNRYVVEGLQSRGAIFVEELHEIPAEHRDQPVVFSAHGVPKSVPADAEAKNLFYLDATCPLVSKVHKQAMRHQRLGRHVILIGHSGHPEVIGTMGQLPDGAVTLIETVEDARSCHFDDENNLGFVTQTTLSVDDTAGIIEELQARFPNLSAPAAESICYATTNRQDAVRSAAPGCDLFLIVGAPNSSNSKRLVEVAEKAGARMSMLVQRAADIEWDRIGDISVVGLSAGASAPEIIVDEIIDAFKARFNVKIELAETTVETENFLVNREIRDVELTVQDMAFVNGEHRVVGIPKLMPKIIQGK.

Cys-19 lines the [4Fe-4S] cluster pocket. Residues His-48 and His-84 each contribute to the (2E)-4-hydroxy-3-methylbut-2-enyl diphosphate site. The dimethylallyl diphosphate site is built by His-48 and His-84. Isopentenyl diphosphate-binding residues include His-48 and His-84. Cys-106 is a [4Fe-4S] cluster binding site. (2E)-4-hydroxy-3-methylbut-2-enyl diphosphate is bound at residue His-134. His-134 contacts dimethylallyl diphosphate. His-134 is an isopentenyl diphosphate binding site. The active-site Proton donor is the Glu-136. (2E)-4-hydroxy-3-methylbut-2-enyl diphosphate is bound at residue Thr-175. A [4Fe-4S] cluster-binding site is contributed by Cys-205. Residues Ser-233, Ser-234, Asn-235, and Ser-278 each coordinate (2E)-4-hydroxy-3-methylbut-2-enyl diphosphate. Dimethylallyl diphosphate-binding residues include Ser-233, Ser-234, Asn-235, and Ser-278. Ser-233, Ser-234, Asn-235, and Ser-278 together coordinate isopentenyl diphosphate.

Belongs to the IspH family. It depends on [4Fe-4S] cluster as a cofactor.

It carries out the reaction isopentenyl diphosphate + 2 oxidized [2Fe-2S]-[ferredoxin] + H2O = (2E)-4-hydroxy-3-methylbut-2-enyl diphosphate + 2 reduced [2Fe-2S]-[ferredoxin] + 2 H(+). It catalyses the reaction dimethylallyl diphosphate + 2 oxidized [2Fe-2S]-[ferredoxin] + H2O = (2E)-4-hydroxy-3-methylbut-2-enyl diphosphate + 2 reduced [2Fe-2S]-[ferredoxin] + 2 H(+). Its pathway is isoprenoid biosynthesis; dimethylallyl diphosphate biosynthesis; dimethylallyl diphosphate from (2E)-4-hydroxy-3-methylbutenyl diphosphate: step 1/1. The protein operates within isoprenoid biosynthesis; isopentenyl diphosphate biosynthesis via DXP pathway; isopentenyl diphosphate from 1-deoxy-D-xylulose 5-phosphate: step 6/6. Catalyzes the conversion of 1-hydroxy-2-methyl-2-(E)-butenyl 4-diphosphate (HMBPP) into a mixture of isopentenyl diphosphate (IPP) and dimethylallyl diphosphate (DMAPP). Acts in the terminal step of the DOXP/MEP pathway for isoprenoid precursor biosynthesis. In Brucella anthropi (strain ATCC 49188 / DSM 6882 / CCUG 24695 / JCM 21032 / LMG 3331 / NBRC 15819 / NCTC 12168 / Alc 37) (Ochrobactrum anthropi), this protein is 4-hydroxy-3-methylbut-2-enyl diphosphate reductase.